The primary structure comprises 3072 residues: Platelet binding protein GspB (3072 aa).

Residues 1-85 (MFFKRQKGQY…AVLGGAVVTS (85 aa)) form the signal peptide. 10 disordered regions span residues 117–147 (EAAT…SASS), 182–254 (SESL…APNV), 876–909 (SAST…SVSA), 936–969 (SAST…SVSA), 1024–2085 (SASV…SVSA), 2106–2139 (SAST…SVSA), 2173–2223 (VSAS…SVSA), 2250–2595 (SAST…SVSA), 2625–2965 (TSAS…NASV), and 3014–3045 (SQSL…GESE). Over residues 118–127 (AATTLSSTEA) the composition is skewed to polar residues. A ser-rich region 1 (SSR1) region spans residues 123 to 236 (SSTEANPVES…SSQQSTEASS (114 aa)). 2 stretches are compositionally biased toward low complexity: residues 131–147 (ESLS…SASS) and 182–238 (SESL…SSQT). A basic region (BR) region spans residues 237–603 (QTGRRRTRRA…GSKFIDTRAG (367 aa)). A ser-rich region 2 (SSR2) region spans residues 604 to 3028 (SISKSQSTSN…ESQSSSASQS (2425 aa)). Over residues 3014-3028 (SQSLSESQSSSASQS) the composition is skewed to low complexity. An LPXTG sorting signal motif is present at residues 3038–3042 (LPRTG). Thr3041 is modified (pentaglycyl murein peptidoglycan amidated threonine). Positions 3042–3072 (GESENKASILALGLGALGLAFKKRKKNESED) are cleaved as a propeptide — removed by sortase.

The protein belongs to the serine-rich repeat protein (SRRP) family. As to quaternary structure, both SSR domains in the unglycosylated protein bind to Asp2 and Asp3; glycosylated protein binds less well. Interacts with the human cell surface glycoprotein GP1BA. In terms of processing, proteolytically cleaved by a metalloprotease. Post-translationally, both SSR1 and SSR2 domains are glycosylated. A truncated derivative (residues 1-2062) contains 105 nmol per nmol of protein, suggesting at least 10% of the apparent molecular weight is due to carbohydrates. Glucose and N-acetylglucosamine are present in a ratio of 30:73 residues per truncated polypeptide, as well as minor amounts of galactose and N-acetylgalactosamine. Glycosylation occurs intracellularly in the Ser-rich regions SSR1 and SSR2. Glycosylation of SSR2 domain may be required to prevent aggregation of GspB. It is probable that most of the Ser residues in SSR1 and SSR2 are O-GlcNAcylated. Sequential glycosylation by sugar transferases are able to generate complex sugar polymorphisms.

The protein localises to the secreted. Its subcellular location is the cell wall. Its function is as follows. Plays a role in virulence and host-pathogen interactions. Mediates binding to human platelets via interaction with the human cell surface glycoprotein GP1BA. Plays a positive role in biofilm formation, possibly by self-association via the basic region (BR). In Streptococcus gordonii, this protein is Platelet binding protein GspB (gspB).